Here is a 741-residue protein sequence, read N- to C-terminus: Mitofusin-1 (741 aa).

The Cytoplasmic segment spans residues 1–584 (MAEPVSPLKH…ASQEELMITL (584 aa)). Residues 9–73 (KHFVLAKKAI…LSIIGEVLSR (65 aa)) are part of a helix bundle domain, formed by helices from N-terminal and C-terminal regions. Residues 72-321 (SRRHMKVAFF…ARLQEFQNFE (250 aa)) form the Dynamin-type G domain. The interval 82-89 (GRTSSGKS) is G1 motif. 85-90 (SSGKSS) serves as a coordination point for GTP. Residues 108 to 109 (IT) are G2 motif. The tract at residues 178 to 181 (DSPG) is G3 motif. Position 237-240 (237-240 (NRWD)) interacts with GTP. The G4 motif stretch occupies residues 237–240 (NRWD). Residue E266 is a region of interest, G5 motif. GTP-binding residues include S284 and K286. Residues 338-364 (EQHTIRAKQILATVKNIMDSVNLAAED) are part of a helix bundle domain, formed by helices from N-terminal and C-terminal regions. Residues 371 to 408 (EEREDQIDRLDFIRNQMNLLTLDVKKKIKEVTEEVANK) adopt a coiled-coil conformation. The chain crosses the membrane as a helical span at residues 585–605 (VTGLASVTSRTSMGIIIVGGV). Residues 606–608 (IWK) are Mitochondrial intermembrane-facing. The chain crosses the membrane as a helical span at residues 609 to 629 (TIGWKLLSVSLTMYGALYLYE). The Cytoplasmic segment spans residues 630–741 (RLSWTTHAKE…QFLPSSNEES (112 aa)). The stretch at 679–734 (RLCQQVDITQKQLEEEIARLPKEIDQLEKIQNNSKLLRNKAVQLENELENFTKQFL) forms a coiled coil. Residues 703–734 (DQLEKIQNNSKLLRNKAVQLENELENFTKQFL) are part of a helix bundle domain, formed by helices from N-terminal and C-terminal regions.

The protein belongs to the TRAFAC class dynamin-like GTPase superfamily. Dynamin/Fzo/YdjA family. Mitofusin subfamily. Homodimer, also in the absence of bound GTP. Forms higher oligomers in the presence of a transition state GTP analog. Forms homomultimers and heteromultimers with MFN2. Oligomerization is essential for mitochondrion fusion. Component of a high molecular weight multiprotein complex. Interacts with VAT1. Interacts with THG1L; THG1L probably functions as a guanyl-nucleotide exchange factor/GEF, activating MFN1. Post-translationally, ubiquitinated by non-degradative ubiquitin by PRKN. Deubiquitination by USP30 inhibits mitochondrial fusion. Ubiquitinated by MARCHF5. When mitochondria are depolarized and dysfunctional, it is ubiquitinated by a SCF (SKP1-CUL1-F-box protein) E3 ubiquitin-protein ligase complex that contains FBXO7 and PRKN. As to expression, detected in kidney and heart (at protein level). Ubiquitous. Expressed at slightly higher level in kidney and heart. Isoform 2 may be overexpressed in some tumors, such as lung cancers.

It localises to the mitochondrion outer membrane. Its subcellular location is the cytoplasm. The catalysed reaction is GTP + H2O = GDP + phosphate + H(+). Mitochondrial outer membrane GTPase that mediates mitochondrial clustering and fusion. Membrane clustering requires GTPase activity. It may involve a major rearrangement of the coiled coil domains. Mitochondria are highly dynamic organelles, and their morphology is determined by the equilibrium between mitochondrial fusion and fission events. Overexpression induces the formation of mitochondrial networks (in vitro). Has low GTPase activity. This Homo sapiens (Human) protein is Mitofusin-1 (MFN1).